A 507-amino-acid chain; its full sequence is Phosphoprotein (507 aa).

An interaction with N0 region spans residues 1 to 48; sequence MAEEQARHVKNGLECIRALKAEPIGSLAVEEAMAAWSEISDNPGQDRA. Disordered stretches follow at residues 40–92, 133–168, 201–228, and 252–273; these read SDNP…DAET, SGLD…ITDR, NNFP…ETPI, and TQCA…GNVP. At serine 86 the chain carries Phosphoserine. Low complexity predominate over residues 133–143; that stretch reads SGLDGDSTLSG. The segment covering 144–160 has biased composition (acidic residues); the sequence is GDDESENSDVDIGEPDT. Phosphoserine is present on serine 151. A compositionally biased stretch (low complexity) spans 260-270; it reads SEPSGPGAPAG. Residues 304–376 are multimerization; it reads GDYYDDELFS…LSSIMIAIPG (73 aa). Interaction with the L polymerase stretches follow at residues 361–377 and 396–410; these read STLE…IPGL and PIIG…AEVL. Positions 457–507 are x domain (XD); the sequence is GPASRSVIRSIIKSSRLEEDRKRYLMTLLDDIKGANDLAKFHQMLMKIIMK. An interaction with the nucleocapsid (N-RNA) region spans residues 459–507; that stretch reads ASRSVIRSIIKSSRLEEDRKRYLMTLLDDIKGANDLAKFHQMLMKIIMK.

The protein belongs to the morbillivirus P protein family. As to quaternary structure, homotetramer. Interacts (via multimerization domain and XD domain) with polymerase L; this interaction forms the polymerase L-P complex. Interacts (via N-terminus) with N0 (via Ncore); this interaction allows P to chaperon N0 to avoid N polymerization and non-specific RNA binding before encapsidation. Interacts (via C-terminus) with N-RNA template (via Ntail); this interaction maintains the P/L complex anchored to the nucleocapsid template during the sequential transcription. Interacts (via C-terminus) with protein C this interaction allows C to associate with the ribonucleocapsid. Post-translationally, phosphorylation on serines by host CK2 is necessary for the formation of viral factories.

Essential cofactor of the RNA polymerase L that plays a central role in the transcription and replication by forming the polymerase complex with RNA polymerase L and recruiting L to the genomic N-RNA template for RNA synthesis. Also plays a central role in the encapsidation of nascent RNA chains by forming the encapsidation complex with the nucleocapsid protein N (N-P complex). Acts as a chaperone for newly synthesized free N protein, so-called N0, allowing encapsidation of nascent RNA chains during replication. The nucleoprotein protein N prevents excessive phosphorylation of P, which leads to down-regulation of viral transcription/ replication. Participates, together with N, in the formation of viral factories (viroplasms), which are large inclusions in the host cytoplasm where replication takes place. The chain is Phosphoprotein (P/V) from Homo sapiens (Human).